The sequence spans 624 residues: MALWGGRFSQAADTRFKQFNDSLRIDYRLAEQDIVGSIAWSKALLSVGVITELEQQKLELALNELKLEVMEDPEQILLSDAEDIHSWVETQLIGKVGDLGKKLHTGRSRNDQVATDLKLWCRQQGHQLLRTLDQLLNQLVNVASEHQATVLPGYTHLQRAQPVTFAHWCLAYVEMIERDYSRLEDAINRLDTCPLGSGALAGTAYPMDREKLARNLGFQRATRNSLDSVSDRDHVMELMSIASISMLHLSRLAEDMIFYNSGESNFIELADTVTSGSSLMPQKKNPDALELIRGKCGRVYGAMAGMMMTVKALPLAYNKDMQEDKEGLFDALDSWSDCIEMAALCFEGIKINGERTLEAAKQGYANSTELADYLVAKGIPFREAHHIVGVAVVGAIEKGCALEELSLAELKAFSEVIEDDVYEILTIESCLAKRCALGGVAPEQVAYAVEQAGKRLQERDNAGVKVRPARLTDLDALEGMVAYWAGLGENLPRNRNELVRDIGSFAVAEHHGEVTGCASLYVYDSGLAEIRSLGVEAGWQSQGQGKAIVQHLVEKAREMAIKKVFVLTRVPEFFMKQDFIPTSRSLLPEKVLKDCDQCPRQHACDEVALEVNLQEQVIIKSSVA.

The argininosuccinate lyase stretch occupies residues 1-466 (MALWGGRFSQ…QERDNAGVKV (466 aa)). An N-acetyltransferase domain is found at 464-614 (VKVRPARLTD…DEVALEVNLQ (151 aa)). A probable acetyltransferase region spans residues 467 to 624 (RPARLTDLDA…EQVIIKSSVA (158 aa)).

This sequence in the N-terminal section; belongs to the lyase 1 family. Argininosuccinate lyase subfamily.

The protein resides in the cytoplasm. The enzyme catalyses 2-(N(omega)-L-arginino)succinate = fumarate + L-arginine. Its pathway is amino-acid biosynthesis; L-arginine biosynthesis; L-arginine from L-ornithine and carbamoyl phosphate: step 3/3. The protein is Bifunctional protein ArgH (argH) of Aliivibrio fischeri (strain ATCC 700601 / ES114) (Vibrio fischeri).